The chain runs to 1399 residues: DNA-directed RNA polymerase subunit beta' (1399 aa).

Positions 70, 72, 85, and 88 each coordinate Zn(2+). Residues D460, D462, and D464 each contribute to the Mg(2+) site. Zn(2+)-binding residues include C814, C888, C895, and C898.

It belongs to the RNA polymerase beta' chain family. The RNAP catalytic core consists of 2 alpha, 1 beta, 1 beta' and 1 omega subunit. When a sigma factor is associated with the core the holoenzyme is formed, which can initiate transcription. The cofactor is Mg(2+). It depends on Zn(2+) as a cofactor.

The catalysed reaction is RNA(n) + a ribonucleoside 5'-triphosphate = RNA(n+1) + diphosphate. DNA-dependent RNA polymerase catalyzes the transcription of DNA into RNA using the four ribonucleoside triphosphates as substrates. The sequence is that of DNA-directed RNA polymerase subunit beta' from Pseudomonas putida (strain GB-1).